Here is a 396-residue protein sequence, read N- to C-terminus: Acetylornithine aminotransferase 2 (396 aa).

Residues 102-103 (GA) and Phe134 each bind pyridoxal 5'-phosphate. Arg137 lines the N(2)-acetyl-L-ornithine pocket. A pyridoxal 5'-phosphate-binding site is contributed by 219–222 (DEVQ). Lys248 carries the post-translational modification N6-(pyridoxal phosphate)lysine. Residue Thr276 coordinates pyridoxal 5'-phosphate.

Belongs to the class-III pyridoxal-phosphate-dependent aminotransferase family. ArgD subfamily. As to quaternary structure, homodimer. The cofactor is pyridoxal 5'-phosphate.

It localises to the cytoplasm. The catalysed reaction is N(2)-acetyl-L-ornithine + 2-oxoglutarate = N-acetyl-L-glutamate 5-semialdehyde + L-glutamate. Its pathway is amino-acid biosynthesis; L-arginine biosynthesis; N(2)-acetyl-L-ornithine from L-glutamate: step 4/4. The chain is Acetylornithine aminotransferase 2 from Bordetella parapertussis (strain 12822 / ATCC BAA-587 / NCTC 13253).